The sequence spans 93 residues: Acyl carrier protein AcpXL (93 aa).

In terms of domain architecture, Carrier spans 2 to 88 (STTFDKVAKI…NLCAKIDALV (87 aa)). S37 is subject to O-(pantetheine 4'-phosphoryl)serine.

In terms of processing, 4'-phosphopantetheine is transferred from CoA to a specific serine of apo-ACP by AcpS. This modification is essential for activity because fatty acids are bound in thioester linkage to the sulfhydryl of the prosthetic group.

Its subcellular location is the cytoplasm. It functions in the pathway glycolipid biosynthesis; KDO(2)-lipid A biosynthesis. In terms of biological role, carrier of the growing fatty acid chain in fatty acid biosynthesis. Is involved in the transfer of long hydroxylated fatty acids to lipid A. The protein is Acyl carrier protein AcpXL (acpXL) of Mesorhizobium japonicum (strain LMG 29417 / CECT 9101 / MAFF 303099) (Mesorhizobium loti (strain MAFF 303099)).